A 510-amino-acid chain; its full sequence is Glycerol kinase (510 aa).

Thr-13 lines the ADP pocket. Thr-13 and Thr-14 together coordinate ATP. Residue Thr-13 participates in sn-glycerol 3-phosphate binding. ADP is bound at residue Arg-17. 4 residues coordinate sn-glycerol 3-phosphate: Arg-83, Glu-84, Tyr-135, and Asp-255. Glycerol contacts are provided by Arg-83, Glu-84, Tyr-135, Asp-255, and Gln-256. ADP contacts are provided by Thr-277, Gly-321, Gly-421, and Asn-425. ATP is bound by residues Thr-277, Gly-321, and Gly-421.

It belongs to the FGGY kinase family.

The enzyme catalyses glycerol + ATP = sn-glycerol 3-phosphate + ADP + H(+). It functions in the pathway polyol metabolism; glycerol degradation via glycerol kinase pathway; sn-glycerol 3-phosphate from glycerol: step 1/1. Functionally, key enzyme in the regulation of glycerol uptake and metabolism. Catalyzes the phosphorylation of glycerol to yield sn-glycerol 3-phosphate. In Haloarcula marismortui (strain ATCC 43049 / DSM 3752 / JCM 8966 / VKM B-1809) (Halobacterium marismortui), this protein is Glycerol kinase.